The sequence spans 163 residues: Nucleotide-binding protein YajQ (163 aa).

It belongs to the YajQ family.

Its function is as follows. Nucleotide-binding protein. The sequence is that of Nucleotide-binding protein YajQ from Salmonella heidelberg (strain SL476).